Consider the following 684-residue polypeptide: Probable metal-nicotianamine transporter YSL9 (684 aa).

The span at 1–10 (MKQERRRKRQ) shows a compositional bias: basic residues. A disordered region spans residues 1-55 (MKQERRRKRQPGPPRLELVVAHPREEEMAGLDGGGDAEEGATHARGGGGAPPPWR). 14 consecutive transmembrane segments (helical) span residues 58–78 (LTARGLVASLAVGAMYSVIVM), 82–102 (LTTGLVPTLNVSAALIAFVVL), 130–150 (CAVACYSIAVGGGFGSYLLGL), 174–194 (GIAWMTGFLLAVSFVGLLALV), 234–254 (VNGFTKYFAMSFFWSFFQWFY), 295–315 (LVNLSLLLGAILSWGVMWPLI), 341–361 (FICVALILGDGLYNFVKIVAL), 402–422 (LAFSGYLGLTFIAVIAIPMMF), 430–450 (VVIAYLLAPALGFCNAYGAGL), 462–482 (IALFILAAWAGKDSGVVAGLV), 515–535 (IIAQAIGTVMGCVISPLTFFL), 568–588 (FSALPQHCLQLCYGFFGFAVA), 612–632 (VPFLVGASFAIDMCIGSLIVF), and 642–662 (AALMVPAVASGLICGDGLWIF).

This sequence belongs to the YSL (TC 2.A.67.2) family.

The protein resides in the membrane. In terms of biological role, may be involved in the transport of nicotianamine-chelated metals. In Oryza sativa subsp. japonica (Rice), this protein is Probable metal-nicotianamine transporter YSL9 (YSL9).